The chain runs to 790 residues: Potassium transporter 22 (790 aa).

Residues 1–64 lie on the Cytoplasmic side of the membrane; that stretch reads MAQQQGQGAG…HGEGWARTLR (64 aa). Residues 65–85 form a helical membrane-spanning segment; it reads LAFQCFGVLYGDIGTSPLYVY. Over 86-98 the chain is Extracellular; that stretch reads STTFDGGIRHTDD. The chain crosses the membrane as a helical span at residues 99–119; it reads LLGVLSLIIYSFLLFTIIKYV. Residues 120 to 198 are Cytoplasmic-facing; that stretch reads YIALRANDDG…DLLENSRPVR (79 aa). The helical transmembrane segment at 199–219 threads the bilayer; it reads ISLFLLTILATAMVISDACLT. Residues 220 to 236 are Extracellular-facing; that stretch reads PAISVLSAVGGLKDKAP. A helical transmembrane segment spans residues 237–257; it reads HLNTEQVVWVTVGILVMLFAV. The Cytoplasmic portion of the chain corresponds to 258-264; that stretch reads QRFGTDK. The chain crosses the membrane as a helical span at residues 265–285; that stretch reads VGYLFAPVVLLWLLLIGGVGV. Over 286 to 318 the chain is Extracellular; the sequence is YNLAAHDVGVLRAFNPKYILDYFRRNGRHGWVS. The chain crosses the membrane as a helical span at residues 319-339; the sequence is LGGVLLCFTGTEALFADLGCF. The Cytoplasmic portion of the chain corresponds to 340-345; sequence SIRSIQ. Residues 346–366 form a helical membrane-spanning segment; sequence LSFAFGLVPAVLLAYAGQAAY. Topologically, residues 367-385 are extracellular; sequence LRVYPDHVGDAFYASTPQV. Residues 386–406 traverse the membrane as a helical segment; the sequence is LFWPTLVLALAASVVGSQAMI. The Cytoplasmic portion of the chain corresponds to 407-437; that stretch reads SCAFATISHSQAMGCFPRVKVVHTSRQYQGQ. A helical transmembrane segment spans residues 438-458; the sequence is VYIPEINLLLGAAACVVTVAA. At 459 to 469 the chain is on the extracellular side; that stretch reads RDTVVIGEAHG. A helical transmembrane segment spans residues 470–490; that stretch reads ICVVLVMLITTLLLTVVMVLV. Residues 491 to 492 are Cytoplasmic-facing; it reads WR. Residues 493–513 form a helical membrane-spanning segment; it reads VNIGWVLVFACVFASTESVYL. At 514-519 the chain is on the extracellular side; sequence TSVLYK. A helical transmembrane segment spans residues 520 to 540; that stretch reads FAHGGYIPVAMSAVLMGVMGV. The Cytoplasmic portion of the chain corresponds to 541 to 790; it reads WHYVHVRRYK…LLKVGMSYEI (250 aa).

This sequence belongs to the HAK/KUP transporter (TC 2.A.72.3) family.

The protein resides in the membrane. Its function is as follows. High-affinity potassium transporter. In Oryza sativa subsp. japonica (Rice), this protein is Potassium transporter 22 (HAK22).